Reading from the N-terminus, the 59-residue chain is Membrane-associated ATPase epsilon chain (59 aa).

The protein to E.hirae NtpH. As to quaternary structure, sul-ATPase is composed of six (or maybe five) subunits: alpha, beta, delta, gamma, C (proteolipid), and possibly epsilon.

The catalysed reaction is ATP + H2O + 4 H(+)(in) = ADP + phosphate + 5 H(+)(out). This chain is Membrane-associated ATPase epsilon chain (atpE), found in Sulfurisphaera tokodaii (strain DSM 16993 / JCM 10545 / NBRC 100140 / 7) (Sulfolobus tokodaii).